Reading from the N-terminus, the 189-residue chain is Elongation factor P (189 aa).

The protein belongs to the elongation factor P family.

It is found in the cytoplasm. Its pathway is protein biosynthesis; polypeptide chain elongation. Its function is as follows. Involved in peptide bond synthesis. Stimulates efficient translation and peptide-bond synthesis on native or reconstituted 70S ribosomes in vitro. Probably functions indirectly by altering the affinity of the ribosome for aminoacyl-tRNA, thus increasing their reactivity as acceptors for peptidyl transferase. In Campylobacter fetus subsp. fetus (strain 82-40), this protein is Elongation factor P.